Consider the following 163-residue polypeptide: Large ribosomal subunit protein uL11 (163 aa).

The disordered stretch occupies residues Met1–Pro26.

It belongs to the universal ribosomal protein uL11 family. In terms of assembly, part of the ribosomal stalk of the 50S ribosomal subunit. Interacts with L10 and the large rRNA to form the base of the stalk. L10 forms an elongated spine to which L12 dimers bind in a sequential fashion forming a multimeric L10(L12)X complex.

Forms part of the ribosomal stalk which helps the ribosome interact with GTP-bound translation factors. The protein is Large ribosomal subunit protein uL11 of Halobacterium salinarum (strain ATCC 29341 / DSM 671 / R1).